The following is a 222-amino-acid chain: Cytochrome b6 (222 aa).

The chain crosses the membrane as a helical span at residues 39 to 59; sequence IFYCLGGLTLTCFLIQFATGF. Y41 contacts heme b. Position 42 (C42) interacts with heme c. Heme b is bound by residues R90, H93, R94, H107, and R110. The next 3 membrane-spanning stretches (helical) occupy residues 97 to 117, 123 to 143, and 193 to 213; these read ASMMVLMMILHVFRVYLTGGF, LTWVVGVMLAVTTVTFGVTGY, and LHTFVLPWAIAVLLLLHFLMI. H194 and H209 together coordinate heme b. R214 and I218 together coordinate heme c. S219 is a binding site for heme b.

Belongs to the cytochrome b family. PetB subfamily. The 4 large subunits of the cytochrome b6-f complex are cytochrome b6, subunit IV (17 kDa polypeptide, PetD), cytochrome f and the Rieske protein, while the 4 small subunits are PetG, PetL, PetM and PetN. The complex functions as a dimer. The cofactor is heme b. Requires heme c as cofactor.

Its subcellular location is the cellular thylakoid membrane. Its function is as follows. Component of the cytochrome b6-f complex, which mediates electron transfer between photosystem II (PSII) and photosystem I (PSI), cyclic electron flow around PSI, and state transitions. The polypeptide is Cytochrome b6 (Synechocystis sp. (strain ATCC 27184 / PCC 6803 / Kazusa)).